We begin with the raw amino-acid sequence, 384 residues long: MAPRAGQRGLWSPLPGLLLLAAALSRPAAPCPFQCYCFGSPRLMLRCASGAELRQPPRDVPPDARNLTIVGANLTVLRAAAFAGGGEGATDGVRLPLLTALRLTHNNIEVVEDGAFDGLPSLAALDLSHNPLRALGYRAFRGLPALRSLQLNHALARGSPGMLDALDAALAPLAELRLLGLVGNALSRLPLAALRLPRLEQLDARVNALAGLGPDELSALERDGDLPQPRLLLADNPLSCGCTSRPLLAWLHNATERVPDARRLRCASPRVLLDRPLIDLDEARLGCSDGDAHESGEGIDVAGPELEASYVFFGLVLALIGLIFLMVLYLNRRGIQRWMHNLREACRDQMEGYHYRYEQDADPRRAPAPAAPAGSRATSPGSGL.

A signal peptide spans 1-30; it reads MAPRAGQRGLWSPLPGLLLLAAALSRPAAP. 2 disulfide bridges follow: Cys-31-Cys-37 and Cys-35-Cys-47. Topologically, residues 31 to 309 are extracellular; sequence CPFQCYCFGS…DVAGPELEAS (279 aa). LRR repeat units lie at residues 61 to 84, 95 to 118, 119 to 142, 173 to 196, and 198 to 219; these read PPDA…AFAG, LPLL…AFDG, LPSL…AFRG, LAEL…ALRL, and RLEQ…ELSA. The N-linked (GlcNAc...) asparagine glycan is linked to Asn-66. 2 cysteine pairs are disulfide-bonded: Cys-240-Cys-266 and Cys-242-Cys-287. Residues 310 to 330 traverse the membrane as a helical segment; the sequence is YVFFGLVLALIGLIFLMVLYL. Residues 331-384 lie on the Cytoplasmic side of the membrane; it reads NRRGIQRWMHNLREACRDQMEGYHYRYEQDADPRRAPAPAAPAGSRATSPGSGL. Positions 361-384 are disordered; the sequence is ADPRRAPAPAAPAGSRATSPGSGL. A compositionally biased stretch (low complexity) spans 367 to 384; that stretch reads PAPAAPAGSRATSPGSGL.

The protein localises to the membrane. The chain is Trophoblast glycoprotein-like (Tpbgl) from Mus musculus (Mouse).